A 164-amino-acid polypeptide reads, in one-letter code: UPF0178 protein RPD_2254 (164 aa).

The protein belongs to the UPF0178 family.

This is UPF0178 protein RPD_2254 from Rhodopseudomonas palustris (strain BisB5).